The chain runs to 339 residues: Phenylalanine--tRNA ligase alpha subunit (339 aa).

E250 provides a ligand contact to Mg(2+).

Belongs to the class-II aminoacyl-tRNA synthetase family. Phe-tRNA synthetase alpha subunit type 1 subfamily. As to quaternary structure, tetramer of two alpha and two beta subunits. The cofactor is Mg(2+).

The protein localises to the cytoplasm. The enzyme catalyses tRNA(Phe) + L-phenylalanine + ATP = L-phenylalanyl-tRNA(Phe) + AMP + diphosphate + H(+). In Bacteroides thetaiotaomicron (strain ATCC 29148 / DSM 2079 / JCM 5827 / CCUG 10774 / NCTC 10582 / VPI-5482 / E50), this protein is Phenylalanine--tRNA ligase alpha subunit.